The chain runs to 363 residues: Cytoplasmic tRNA 2-thiolation protein 1 (363 aa).

Residues 340–363 (ASLNGTPRTPPTPAEPVEGIERAA) form a disordered region.

It belongs to the TtcA family. CTU1/NCS6/ATPBD3 subfamily.

It is found in the cytoplasm. The protein operates within tRNA modification; 5-methoxycarbonylmethyl-2-thiouridine-tRNA biosynthesis. Plays a central role in 2-thiolation of mcm(5)S(2)U at tRNA wobble positions of tRNA(Lys), tRNA(Glu) and tRNA(Gln). Directly binds tRNAs and probably acts by catalyzing adenylation of tRNAs, an intermediate required for 2-thiolation. It is unclear whether it acts as a sulfurtransferase that transfers sulfur from thiocarboxylated URM1 onto the uridine of tRNAs at wobble position. Prior mcm(5) tRNA modification by the elongator complex is required for 2-thiolation. May also be involved in protein urmylation. This is Cytoplasmic tRNA 2-thiolation protein 1 from Cryptococcus neoformans var. neoformans serotype D (strain B-3501A) (Filobasidiella neoformans).